We begin with the raw amino-acid sequence, 515 residues long: Nectin-1 (515 aa).

The N-terminal stretch at 1–30 (MARMGLAGAAGRWWGLALGLTAFFLPGAHT) is a signal peptide. Positions 31–141 (QVVQVNDSMY…GNRESQLNLT (111 aa)) constitute an Ig-like V-type domain. The Extracellular portion of the chain corresponds to 31-355 (QVVQVNDSMY…GRRAGQVPTA (325 aa)). N-linked (GlcNAc...) asparagine glycans are attached at residues Asn-36, Asn-72, Asn-139, Asn-202, Asn-286, Asn-297, Asn-307, and Asn-332. A disulfide bond links Cys-51 and Cys-124. Ig-like C2-type domains follow at residues 145 to 243 (KPTN…TLNV) and 247 to 334 (PEVT…VNIT). 2 cysteine pairs are disulfide-bonded: Cys-172/Cys-226 and Cys-269/Cys-316. The interval 282–299 (WTTLNGSLPKGVEAQNRT) is interaction with FGFR. A helical membrane pass occupies residues 356-376 (IIGGVVGSILLVLFVVGGIVV). The Cytoplasmic portion of the chain corresponds to 377–515 (ALCRRRHTFK…SFISKKEWYV (139 aa)). The disordered stretch occupies residues 400-486 (YSKAGIPQHH…DGYGDRTLGY (87 aa)). Ser-422, Ser-434, and Ser-435 each carry phosphoserine. Tyr-436 carries the phosphotyrosine modification. The span at 436-445 (YEEEEEEEGG) shows a compositional bias: acidic residues. Positions 446–464 (GGERKVGGPHPKYDEDAKR) are enriched in basic and acidic residues. Ser-509 carries the phosphoserine modification.

The protein belongs to the nectin family. (Microbial infection) Interacts with herpes pseudorabies virus/PRV envelope glycoprotein D.

Its subcellular location is the cell membrane. The protein localises to the cell junction. It is found in the adherens junction. The protein resides in the presynaptic cell membrane. Its function is as follows. (Microbial infection) Acts as a receptor for herpes simplex virus 1/HHV-1, herpes simplex virus 2/HHV-2, and pseudorabies virus/PRV. The sequence is that of Nectin-1 from Sus scrofa (Pig).